The chain runs to 118 residues: Small ribosomal subunit protein uS13 (118 aa).

A disordered region spans residues 94-118 (SLPLRGQRTKTNARTRKGPRKPIKK).

Belongs to the universal ribosomal protein uS13 family. As to quaternary structure, part of the 30S ribosomal subunit. Forms a loose heterodimer with protein S19. Forms two bridges to the 50S subunit in the 70S ribosome.

Located at the top of the head of the 30S subunit, it contacts several helices of the 16S rRNA. In the 70S ribosome it contacts the 23S rRNA (bridge B1a) and protein L5 of the 50S subunit (bridge B1b), connecting the 2 subunits; these bridges are implicated in subunit movement. Contacts the tRNAs in the A and P-sites. In Shewanella amazonensis (strain ATCC BAA-1098 / SB2B), this protein is Small ribosomal subunit protein uS13.